A 133-amino-acid polypeptide reads, in one-letter code: Small ribosomal subunit protein uS8 (133 aa).

The protein belongs to the universal ribosomal protein uS8 family. In terms of assembly, part of the 30S ribosomal subunit.

Functionally, one of the primary rRNA binding proteins, it binds directly to 16S rRNA central domain where it helps coordinate assembly of the platform of the 30S subunit. The chain is Small ribosomal subunit protein uS8 from Sulfolobus acidocaldarius (strain ATCC 33909 / DSM 639 / JCM 8929 / NBRC 15157 / NCIMB 11770).